We begin with the raw amino-acid sequence, 219 residues long: Probable GTP-binding protein EngB (219 aa).

In terms of domain architecture, EngB-type G spans 24-207 (VQPEIAFAGR…HELIESWLRP (184 aa)). GTP contacts are provided by residues 32–39 (GRSNAGKS), 59–63 (GRTQH), 81–84 (DLPG), 148–151 (TKCD), and 186–188 (FSA). Serine 39 and threonine 61 together coordinate Mg(2+).

Belongs to the TRAFAC class TrmE-Era-EngA-EngB-Septin-like GTPase superfamily. EngB GTPase family. Requires Mg(2+) as cofactor.

In terms of biological role, necessary for normal cell division and for the maintenance of normal septation. The sequence is that of Probable GTP-binding protein EngB from Burkholderia ambifaria (strain ATCC BAA-244 / DSM 16087 / CCUG 44356 / LMG 19182 / AMMD) (Burkholderia cepacia (strain AMMD)).